A 670-amino-acid polypeptide reads, in one-letter code: Auxin response factor 16 (670 aa).

A DNA-binding region (TF-B3) is located at residues 120–222 (FAKTLTQSDA…DLCVGIRRAK (103 aa)). Over residues 545-557 (KTQISSGGSNQNG) the composition is skewed to polar residues. The interval 545–579 (KTQISSGGSNQNGVAGREFSSSDEGSPCSKKVHDA) is disordered. The PB1 domain maps to 584-664 (TGHCKVFMES…RRLTILTEQG (81 aa)).

The protein belongs to the ARF family. In terms of assembly, homodimers and heterodimers.

It is found in the nucleus. In terms of biological role, auxin response factors (ARFs) are transcriptional factors that bind specifically to the DNA sequence 5'-TGTCTC-3' found in the auxin-responsive promoter elements (AuxREs). Could act as transcriptional activator or repressor. Formation of heterodimers with Aux/IAA proteins may alter their ability to modulate early auxin response genes expression. The sequence is that of Auxin response factor 16 (ARF16) from Arabidopsis thaliana (Mouse-ear cress).